A 507-amino-acid chain; its full sequence is Dolichyl pyrophosphate Man9GlcNAc2 alpha-1,3-glucosyltransferase (507 aa).

Residues 1-2 (ME) are Cytoplasmic-facing. Residues 3–23 (SWTWMTVVVLLGLTVRWTVSL) traverse the membrane as a helical segment. At 24-114 (NSYSGAGKPP…SQAHKLFMRT (91 aa)) the chain is on the lumenal side. An N-linked (GlcNAc...) asparagine glycan is attached at Asn59. A helical transmembrane segment spans residues 115 to 135 (TVLAADLLIYIPAVLLYCYSL). Topologically, residues 136–143 (KEISPKRK) are cytoplasmic. Residues 144 to 164 (IASALCILLYPGLILIDYGHF) traverse the membrane as a helical segment. At 165–172 (QYNSVSLG) the chain is on the lumenal side. A helical transmembrane segment spans residues 173-193 (FALWGVLGVSCDWDLLGSLAF). Topologically, residues 194–229 (CLALNYKQMELYHSLPFFCFLLGKCFKKGLRGKGSA) are cytoplasmic. The chain crosses the membrane as a helical span at residues 230-250 (LFIRIACTVVASFLLCWLPFL). The Lumenal portion of the chain corresponds to 251–297 (TEREHALQVVRRLFPVDRGLFEDKVANIWCSLNVFLKIKDILPRHIQ). Residues 298 to 318 (IAISFCFTFLSLLPACIKLTV) form a helical membrane-spanning segment. The Cytoplasmic segment spans residues 319–332 (QPSAKGFRFTLVSC). A helical membrane pass occupies residues 333–353 (ALSFFLFSFQVHEKSILLVSL). At 354-361 (PVCLVLTE) the chain is on the lumenal side. The chain crosses the membrane as a helical span at residues 362–382 (IPFMSTWFLLVSTFSMLPLLL). Topologically, residues 383-385 (KDQ) are cytoplasmic. The chain crosses the membrane as a helical span at residues 386–406 (LLLPSVVTVMAFLIACSTFFP). Residues 407 to 437 (MFENTSEEQLQLKSFAVSVRRHLPGFTFLPR) lie on the Lumenal side of the membrane. The chain crosses the membrane as a helical span at residues 438-458 (IIQCLFLSSVITMILLTILSV). The Cytoplasmic portion of the chain corresponds to 459-468 (TLDPPQKLPD). A helical transmembrane segment spans residues 469–489 (LFSVLICFVSCVNFVFFLVYF). Over 490-507 (NIVIMWDSKNGRNRKKID) the chain is Lumenal.

It belongs to the ALG6/ALG8 glucosyltransferase family.

It localises to the endoplasmic reticulum membrane. The enzyme catalyses an alpha-D-Man-(1-&gt;2)-alpha-D-Man-(1-&gt;2)-alpha-D-Man-(1-&gt;3)-[alpha-D-Man-(1-&gt;2)-alpha-D-Man-(1-&gt;3)-[alpha-D-Man-(1-&gt;2)-alpha-D-Man-(1-&gt;6)]-alpha-D-Man-(1-&gt;6)]-beta-D-Man-(1-&gt;4)-beta-D-GlcNAc-(1-&gt;4)-alpha-D-GlcNAc-diphospho-di-trans,poly-cis-dolichol + a di-trans,poly-cis-dolichyl beta-D-glucosyl phosphate = an alpha-D-Glc-(1-&gt;3)-alpha-D-Man-(1-&gt;2)-alpha-D-Man-(1-&gt;2)-alpha-D-Man-(1-&gt;3)-[alpha-D-Man-(1-&gt;2)-alpha-D-Man-(1-&gt;3)-[alpha-D-Man-(1-&gt;2)-alpha-D-Man-(1-&gt;6)]-alpha-D-Man-(1-&gt;6)]-beta-D-Man-(1-&gt;4)-beta-D-GlcNAc-(1-&gt;4)-alpha-D-GlcNAc-diphospho-di-trans,poly-cis-dolichol + a di-trans,poly-cis-dolichyl phosphate + H(+). It functions in the pathway protein modification; protein glycosylation. In terms of biological role, dolichyl pyrophosphate Man9GlcNAc2 alpha-1,3-glucosyltransferase that operates in the biosynthetic pathway of dolichol-linked oligosaccharides, the glycan precursors employed in protein asparagine (N)-glycosylation. The assembly of dolichol-linked oligosaccharides begins on the cytosolic side of the endoplasmic reticulum membrane and finishes in its lumen. The sequential addition of sugars to dolichol pyrophosphate produces dolichol-linked oligosaccharides containing fourteen sugars, including two GlcNAcs, nine mannoses and three glucoses. Once assembled, the oligosaccharide is transferred from the lipid to nascent proteins by oligosaccharyltransferases. In the lumen of the endoplasmic reticulum, adds the first glucose residue from dolichyl phosphate glucose (Dol-P-Glc) onto the lipid-linked oligosaccharide intermediate Man(9)GlcNAc(2)-PP-Dol to produce Glc(1)Man(9)GlcNAc(2)-PP-Dol. Glc(1)Man(9)GlcNAc(2)-PP-Dol is a substrate for ALG8, the following enzyme in the biosynthetic pathway. The protein is Dolichyl pyrophosphate Man9GlcNAc2 alpha-1,3-glucosyltransferase of Rattus norvegicus (Rat).